The following is a 390-amino-acid chain: Large ribosomal subunit protein mL44 (390 aa).

The transit peptide at 1-59 (MGIVLKRAIAAGMKPFPNSTWHWSRTIRPFSQHLSSTCFLQQSSRFTSKRYLHLSTLTQ) directs the protein to the mitochondrion. Residues 139-205 (AFVNTVPTNK…LAHIAKYWGI (67 aa)) form the RNase III domain. A DRBM domain is found at 302 to 372 (QPTRELAMLC…ATDALMKWYC (71 aa)).

Belongs to the ribonuclease III family. Mitochondrion-specific ribosomal protein mL44 subfamily. Component of the mitochondrial large ribosomal subunit (mt-LSU). Mature yeast 74S mitochondrial ribosomes consist of a small (37S) and a large (54S) subunit. The 37S small subunit contains a 15S ribosomal RNA (15S mt-rRNA) and 34 different proteins. The 54S large subunit contains a 21S rRNA (21S mt-rRNA) and 46 different proteins. mL44 forms a heterodimer with mL57 and stabilizes rRNA expansion segments 1/2 at a membrane-facing protuberance close to the point of attachment of the ribosome to the translocon in the membrane.

It is found in the mitochondrion. In terms of biological role, component of the mitochondrial ribosome (mitoribosome), a dedicated translation machinery responsible for the synthesis of mitochondrial genome-encoded proteins, including at least some of the essential transmembrane subunits of the mitochondrial respiratory chain. The mitoribosomes are attached to the mitochondrial inner membrane and translation products are cotranslationally integrated into the membrane. The sequence is that of Large ribosomal subunit protein mL44 (MRPL3) from Saccharomyces cerevisiae (strain ATCC 204508 / S288c) (Baker's yeast).